A 361-amino-acid polypeptide reads, in one-letter code: D-alanine--D-alanine ligase (361 aa).

The ATP-grasp domain maps to 134–344; the sequence is KLLLKSFNIP…FKDLIDNLID (211 aa). Position 167–222 (167–222) interacts with ATP; it reads KEVLGYPVIVKPAVLGSSIGINVAYSENQIESCIEEALKYDLTIVIEKFIEAREIE. Aspartate 297, glutamate 311, and asparagine 313 together coordinate Mg(2+).

The protein belongs to the D-alanine--D-alanine ligase family. Mg(2+) is required as a cofactor. Mn(2+) serves as cofactor.

It localises to the cytoplasm. It catalyses the reaction 2 D-alanine + ATP = D-alanyl-D-alanine + ADP + phosphate + H(+). It participates in cell wall biogenesis; peptidoglycan biosynthesis. Cell wall formation. The polypeptide is D-alanine--D-alanine ligase (Borreliella afzelii (strain PKo) (Borrelia afzelii)).